Consider the following 343-residue polypeptide: Ribosomal RNA small subunit methyltransferase C (343 aa).

Belongs to the methyltransferase superfamily. RsmC family. Monomer.

It localises to the cytoplasm. It catalyses the reaction guanosine(1207) in 16S rRNA + S-adenosyl-L-methionine = N(2)-methylguanosine(1207) in 16S rRNA + S-adenosyl-L-homocysteine + H(+). Specifically methylates the guanine in position 1207 of 16S rRNA in the 30S particle. The sequence is that of Ribosomal RNA small subunit methyltransferase C from Escherichia coli (strain ATCC 8739 / DSM 1576 / NBRC 3972 / NCIMB 8545 / WDCM 00012 / Crooks).